We begin with the raw amino-acid sequence, 868 residues long: Rifampicin phosphotransferase (868 aa).

An ATP-binding region spans residues 1 to 313; the sequence is MSSFVLDFQE…IYIVQSRPIT (313 aa). 8 residues coordinate ATP: lysine 22, arginine 116, glycine 131, threonine 135, glutamine 182, glutamate 296, glutamine 308, and arginine 310. Residues 326–756 are rifampicin-binding; sequence NHVYISVGHQ…TSDGEIITGK (431 aa). The tract at residues 769–867 is swivel phosphohistidine; that stretch reads GLPVSSGVVE…VHGTEGYIEV (99 aa). Histidine 827 (tele-phosphohistidine intermediate) is an active-site residue.

It belongs to the rifampicin phosphotransferase family.

It catalyses the reaction rifampicin + ATP + H2O = 21-phosphorifampicin + AMP + phosphate + 2 H(+). In terms of biological role, catalyzes the phosphorylation of rifampicin, also known as rifampin (RIF), leading to its inactivation. Confers high level resistance to a variety of clinically used rifamycin antibiotics. Does not show phosphoenolpyruvate (PEP) synthase activity. In Bacillus cereus (strain ATCC 14579 / DSM 31 / CCUG 7414 / JCM 2152 / NBRC 15305 / NCIMB 9373 / NCTC 2599 / NRRL B-3711), this protein is Rifampicin phosphotransferase.